The following is a 247-amino-acid chain: Ubiquinone biosynthesis O-methyltransferase (247 aa).

Arginine 45, glycine 65, aspartate 86, and leucine 130 together coordinate S-adenosyl-L-methionine.

Belongs to the methyltransferase superfamily. UbiG/COQ3 family.

The catalysed reaction is a 3-demethylubiquinol + S-adenosyl-L-methionine = a ubiquinol + S-adenosyl-L-homocysteine + H(+). It catalyses the reaction a 3-(all-trans-polyprenyl)benzene-1,2-diol + S-adenosyl-L-methionine = a 2-methoxy-6-(all-trans-polyprenyl)phenol + S-adenosyl-L-homocysteine + H(+). It functions in the pathway cofactor biosynthesis; ubiquinone biosynthesis. O-methyltransferase that catalyzes the 2 O-methylation steps in the ubiquinone biosynthetic pathway. The chain is Ubiquinone biosynthesis O-methyltransferase from Alkalilimnicola ehrlichii (strain ATCC BAA-1101 / DSM 17681 / MLHE-1).